We begin with the raw amino-acid sequence, 123 residues long: Small ribosomal subunit protein uS12 (123 aa).

A 3-methylthioaspartic acid modification is found at Asp-89. Residues 101–123 (SLDTSGVKDRKQGRSKYGAKRPK) form a disordered region. Basic residues predominate over residues 113 to 123 (GRSKYGAKRPK).

The protein belongs to the universal ribosomal protein uS12 family. Part of the 30S ribosomal subunit. Contacts proteins S8 and S17. May interact with IF1 in the 30S initiation complex.

With S4 and S5 plays an important role in translational accuracy. Its function is as follows. Interacts with and stabilizes bases of the 16S rRNA that are involved in tRNA selection in the A site and with the mRNA backbone. Located at the interface of the 30S and 50S subunits, it traverses the body of the 30S subunit contacting proteins on the other side and probably holding the rRNA structure together. The combined cluster of proteins S8, S12 and S17 appears to hold together the shoulder and platform of the 30S subunit. This Azotobacter vinelandii (strain DJ / ATCC BAA-1303) protein is Small ribosomal subunit protein uS12.